The primary structure comprises 289 residues: UPF0173 metal-dependent hydrolase H16_A2129 (289 aa).

Belongs to the UPF0173 family.

This is UPF0173 metal-dependent hydrolase H16_A2129 from Cupriavidus necator (strain ATCC 17699 / DSM 428 / KCTC 22496 / NCIMB 10442 / H16 / Stanier 337) (Ralstonia eutropha).